Here is an 868-residue protein sequence, read N- to C-terminus: MSKSLVIVESPAKAKTINKYLGSQYVVKSSVGHIRDLPTVGSSTGEKAKPISTKGMDAEEKAKIKAEKERNALVKRMGIDPYHDWKANYQILPGKEKVVSELKSLAKKADHIYLATDLDREGEAIAWHLREVIGGNDDRFSRVVFNEITKNAIKQAFEKPEQLNMDRVNAQQTRRFLDRVVGFMVSPLLWKKVARGLSAGRVQSVAVKLLVEREREIKAFQPEEYWEVAVLTNNQNKQAIRLDVTDYKGKKFDPKNQKEAQSAVDFLNVSDYVVTDLETKPTSSRPRAPFITSTLQQTASTRLGFGVKKTMMLAQRLYEAGYITYMRTDSTNLSQDALNMARTYIENHFGAQYLPEKPNFYSSKENAQEAHEAIRPSDIRALPESLEGMEKDAVRLYDLIWCQFLACQMPPAQYDSSTLTVTAGDYTLKAKGRILRFDGWTKVLPQIGKNPEDQELPSVTVSEKLALKEVQPTQHFTKPPARFTEAALVKELEKRGIGRPSTYAAIISTIQERGYVRTENRRFYAEKMGEIVTDRLNESFGELMNYDFTANMEDTLDKIASGSVNWKTELNQFFKDFSSQLSKAELDELEGGMRPNSLVETDIKCPTCGRNMAIRTASTGVFLGCTGYALPPKERCKTTINLIPEAELLNVLDESSETKALMDRKRCTKCGTAMDSYVIDAHRKIHICGNNPNCDGYLIEEGSFKIKGYDGPVVECDKCGADMHLKLGRFGKYMGCTNCDNTRKILKNGEVAPPKEEPVHFPELKCEKSDAYFVLRDGASGVFMSAHNFPKSRETRPVKIAELVQYRERLPEKLAYLADAPQKDPEENEAIVRFSRKEKKQYVTSEKEGKATKWIVDFTNGKWVERKK.

Residues 3–148 (KSLVIVESPA…RFSRVVFNEI (146 aa)) form the Toprim domain. Residues Glu-9 and Asp-117 each coordinate Mg(2+). Residues 164–581 (NMDRVNAQQT…QFFKDFSSQL (418 aa)) enclose the Topo IA-type catalytic domain. An interaction with DNA region spans residues 198-203 (SAGRVQ). Tyr-325 acts as the O-(5'-phospho-DNA)-tyrosine intermediate in catalysis. C4-type zinc fingers lie at residues 605-636 (CPTC…KERC), 667-694 (CTKC…NPNC), and 716-739 (CDKC…CTNC).

It belongs to the type IA topoisomerase family. In terms of assembly, monomer. The cofactor is Mg(2+).

The catalysed reaction is ATP-independent breakage of single-stranded DNA, followed by passage and rejoining.. Functionally, releases the supercoiling and torsional tension of DNA, which is introduced during the DNA replication and transcription, by transiently cleaving and rejoining one strand of the DNA duplex. Introduces a single-strand break via transesterification at a target site in duplex DNA. The scissile phosphodiester is attacked by the catalytic tyrosine of the enzyme, resulting in the formation of a DNA-(5'-phosphotyrosyl)-enzyme intermediate and the expulsion of a 3'-OH DNA strand. The free DNA strand then undergoes passage around the unbroken strand, thus removing DNA supercoils. Finally, in the religation step, the DNA 3'-OH attacks the covalent intermediate to expel the active-site tyrosine and restore the DNA phosphodiester backbone. The chain is DNA topoisomerase 1 from Haemophilus influenzae (strain ATCC 51907 / DSM 11121 / KW20 / Rd).